Consider the following 378-residue polypeptide: Chaperone protein DnaJ (378 aa).

In terms of domain architecture, J spans 5–69; the sequence is EFYDRLGVSK…QKRAAYDQYG (65 aa). Residues 135–217 form a CR-type zinc finger; the sequence is GTEKEVKYHR…CHGTGHEKQA (83 aa). Zn(2+)-binding residues include cysteine 148, cysteine 151, cysteine 165, cysteine 168, cysteine 191, cysteine 194, cysteine 205, and cysteine 208. CXXCXGXG motif repeat units follow at residues 148-155, 165-172, 191-198, and 205-212; these read CRTCNGSG, CGRCHGAG, CDVCHGRG, and CTTCHGTG.

This sequence belongs to the DnaJ family. Homodimer. The cofactor is Zn(2+).

Its subcellular location is the cytoplasm. Its function is as follows. Participates actively in the response to hyperosmotic and heat shock by preventing the aggregation of stress-denatured proteins and by disaggregating proteins, also in an autonomous, DnaK-independent fashion. Unfolded proteins bind initially to DnaJ; upon interaction with the DnaJ-bound protein, DnaK hydrolyzes its bound ATP, resulting in the formation of a stable complex. GrpE releases ADP from DnaK; ATP binding to DnaK triggers the release of the substrate protein, thus completing the reaction cycle. Several rounds of ATP-dependent interactions between DnaJ, DnaK and GrpE are required for fully efficient folding. Also involved, together with DnaK and GrpE, in the DNA replication of plasmids through activation of initiation proteins. In Streptococcus pneumoniae serotype 4 (strain ATCC BAA-334 / TIGR4), this protein is Chaperone protein DnaJ.